Reading from the N-terminus, the 93-residue chain is Protamine-3 (93 aa).

The interval 1 to 93 is disordered; that stretch reads MGSRCAKLGT…QSPEPKQTRS (93 aa). Positions 37-57 are enriched in acidic residues; that stretch reads EGEEEEEGEEEEEEEGEEEEL. A compositionally biased stretch (polar residues) spans 81 to 93; that stretch reads EVQQSPEPKQTRS. Serine 85 bears the Phosphoserine mark.

Belongs to the protamine P3 family.

The protein resides in the nucleus. Its subcellular location is the chromosome. In terms of biological role, protamines substitute for histones in the chromatin of sperm during the haploid phase of spermatogenesis. They compact sperm DNA into a highly condensed, stable and inactive complex. In Bos taurus (Bovine), this protein is Protamine-3 (PRM3).